A 313-amino-acid chain; its full sequence is MEFKHQTVLLQEAISGLNVQNNGIYVDCTLGRAGHSLEILKHLPNGKLYCFEQDEAAIVVSEEILQKSKYRNYEIIKNNFVNLAAELQLRNVKAVNGILYDLGVSSPQLDDDKRGFSYRYDSPLDMRMNQHQGLTAKTVVNTYSQEALVKLFQDYGEEPFAKVIAKTIVIARNEQEIVTTFHLVEIIKKSLPQKILKKAKHPAKRVFQALRIEVNQELFVLQESLRQATTLLAVHGRLVVISFHSLEDRIVKKYFQSLTKDPNYEINQQLPAISYFESDYHIITKKVIVSSVTEQTNNHRSRSAKLRILERVK.

Residues 33–35 (AGH), Glu52, Phe80, Asp101, and Gln108 contribute to the S-adenosyl-L-methionine site.

It belongs to the methyltransferase superfamily. RsmH family.

It is found in the cytoplasm. It catalyses the reaction cytidine(1402) in 16S rRNA + S-adenosyl-L-methionine = N(4)-methylcytidine(1402) in 16S rRNA + S-adenosyl-L-homocysteine + H(+). Its function is as follows. Specifically methylates the N4 position of cytidine in position 1402 (C1402) of 16S rRNA. This is Ribosomal RNA small subunit methyltransferase H from Spiroplasma kunkelii.